The sequence spans 110 residues: Large ribosomal subunit protein uL22 (110 aa).

Belongs to the universal ribosomal protein uL22 family. As to quaternary structure, part of the 50S ribosomal subunit.

Functionally, this protein binds specifically to 23S rRNA; its binding is stimulated by other ribosomal proteins, e.g. L4, L17, and L20. It is important during the early stages of 50S assembly. It makes multiple contacts with different domains of the 23S rRNA in the assembled 50S subunit and ribosome. In terms of biological role, the globular domain of the protein is located near the polypeptide exit tunnel on the outside of the subunit, while an extended beta-hairpin is found that lines the wall of the exit tunnel in the center of the 70S ribosome. This Vibrio cholerae serotype O1 (strain ATCC 39541 / Classical Ogawa 395 / O395) protein is Large ribosomal subunit protein uL22.